We begin with the raw amino-acid sequence, 220 residues long: Inner kinetochore subunit fta3 (220 aa).

This sequence belongs to the CENP-H/MCM16 family. Component of the inner kinetochore constitutive centromere-associated network (CCAN) (also known as central kinetochore Sim4 complex in fission yeast), which is composed of at least cnl2, cnp3, cnp20, fta1, fta2, fta3, fta4, fta6, fta7, mal2, mhf1, mhf2, mis6, mis15, mis17, sim4 and wip1.

The protein resides in the nucleus. It is found in the chromosome. The protein localises to the centromere. It localises to the kinetochore. In terms of biological role, component of the kinetochore, a multiprotein complex that assembles on centromeric DNA and attaches chromosomes to spindle microtubules, mediating chromosome segregation and sister chromatid segregation during meiosis and mitosis. Component of the inner kinetochore constitutive centromere-associated network (CCAN), which serves as a structural platform for outer kinetochore assembly. Fta2, fta3 and fta4 associate with the central core (cnt) and inner repeat (inr) region of the centromere. In Schizosaccharomyces pombe (strain 972 / ATCC 24843) (Fission yeast), this protein is Inner kinetochore subunit fta3 (fta3).